The following is a 388-amino-acid chain: UDP-N-acetylglucosamine--N-acetylmuramyl-(pentapeptide) pyrophosphoryl-undecaprenol N-acetylglucosamine transferase (388 aa).

UDP-N-acetyl-alpha-D-glucosamine-binding positions include 15–17 (TGG), asparagine 125, arginine 168, serine 196, and glutamine 297.

The protein belongs to the glycosyltransferase 28 family. MurG subfamily.

Its subcellular location is the cell inner membrane. It carries out the reaction di-trans,octa-cis-undecaprenyl diphospho-N-acetyl-alpha-D-muramoyl-L-alanyl-D-glutamyl-meso-2,6-diaminopimeloyl-D-alanyl-D-alanine + UDP-N-acetyl-alpha-D-glucosamine = di-trans,octa-cis-undecaprenyl diphospho-[N-acetyl-alpha-D-glucosaminyl-(1-&gt;4)]-N-acetyl-alpha-D-muramoyl-L-alanyl-D-glutamyl-meso-2,6-diaminopimeloyl-D-alanyl-D-alanine + UDP + H(+). It participates in cell wall biogenesis; peptidoglycan biosynthesis. Functionally, cell wall formation. Catalyzes the transfer of a GlcNAc subunit on undecaprenyl-pyrophosphoryl-MurNAc-pentapeptide (lipid intermediate I) to form undecaprenyl-pyrophosphoryl-MurNAc-(pentapeptide)GlcNAc (lipid intermediate II). This is UDP-N-acetylglucosamine--N-acetylmuramyl-(pentapeptide) pyrophosphoryl-undecaprenol N-acetylglucosamine transferase from Novosphingobium aromaticivorans (strain ATCC 700278 / DSM 12444 / CCUG 56034 / CIP 105152 / NBRC 16084 / F199).